A 149-amino-acid chain; its full sequence is Ribosome-binding factor A (149 aa).

This sequence belongs to the RbfA family. In terms of assembly, monomer. Binds 30S ribosomal subunits, but not 50S ribosomal subunits or 70S ribosomes.

Its subcellular location is the cytoplasm. Its function is as follows. One of several proteins that assist in the late maturation steps of the functional core of the 30S ribosomal subunit. Associates with free 30S ribosomal subunits (but not with 30S subunits that are part of 70S ribosomes or polysomes). Required for efficient processing of 16S rRNA. May interact with the 5'-terminal helix region of 16S rRNA. The protein is Ribosome-binding factor A of Caulobacter vibrioides (strain ATCC 19089 / CIP 103742 / CB 15) (Caulobacter crescentus).